The chain runs to 330 residues: MFPRVAFLGQYPVPSKDLPLTFISLEEWTLVRLHGPDVIQCLHNQFTCDIQNLNKHKYSFAAHCNPKGKMISNLYVFHLKNQEMAFIERLNICKKQIEEMKKYMVFSNVTVIPDYNAILIGIAGTNARNHLSMFFSVLPNKTHTIIHTQDVTLLYLSSPSERFLLIINKKSVLDYLLNESQSQIQFNDSRQWVSLDMEAGYPIIEPITSELFIPQAVNMDILDGISFNKGCYIGQESIARIKYRGYNKQTLYRLNGVMDYKKNYNLPAAGDQVELKINNQHWKNVGIVLQSCQIKKDNIWVQVVLNRSILEPSELRITNTQTHDNLMFYY.

Folate is bound by residues W28 and W192.

The protein belongs to the tRNA-modifying YgfZ family.

Its subcellular location is the cytoplasm. Folate-binding protein involved in regulating the level of ATP-DnaA and in the modification of some tRNAs. It is probably a key factor in regulatory networks that act via tRNA modification, such as initiation of chromosomal replication. This Blochmanniella pennsylvanica (strain BPEN) protein is tRNA-modifying protein YgfZ.